An 826-amino-acid chain; its full sequence is MEEKYVFAEIEEKLRRRWETEGIYHVPDFSNRPKYYCLEMFPYPSGNLHMGHVRNYAIGDVVARFKTMRGYDVLHPMGWDAFGLPAENAAIQHGVPPARWTWDNINVMRTQLKLLGVSYDWRRELATCHPGYYRWTQWLFLQFYHRGLAYKAKAPVNWCPSCATVLANEQVVAGGCERCKTAVERRELEQWFFRITAYADRLLKDLAKLPGWPEKVKVMQENWIGRSTGAEIAFPLAGTDEAIRVFTTRPDTLGGVTYMTIAPEHPLVSRVTTPEHRAAVEAFTERARSLSELDRTAGEHEKEGLFTGAYCVNPLTGEQVPVFVANYVLMEYGTGCVMGVPAHDQRDFEFARKYGLPVRVVIQPEGDLLDGDTMSQAYTGPGRLVNTPGFDRMANAEAIPAITRYLEARGAARFQVQYRLRDWLISRQRYWGAPIPIVYCEGCGVVPVPEEGLPVLLPEDVAFKPTGRSPLTESPDFVNTTCPTCGGPARRETDTMDTFMCSSWYYFRFTSPREENGPWGLERVDRWLPVDQYIGGVEHAILHLMYSRFFTKVLYDMGLVKVQEPFTNLLTQGMVLKDGAKMSKSKGNVVSPEDILNRYGADTTRLFVLFAAPPERDLEWSDQGVEGCYRFLQRVWRLVNSVADEIRGAAPVPSANLVGVNRSMRRLTHQTIKKVTEDIETRFNFNTAISAAMELVNGMYHFRDRVAPVNRDPAVMREAVERLLLLLAPFAPFLADELWARTGHPESIHREPWPEYDPELLVEDQVEIVVQINGRVRDRLMVAADIAPEAMRDTVLEQPRVQALVAGKEIVKVVPVPGKLVNIVVR.

Positions 42 to 52 (PYPSGNLHMGH) match the 'HIGH' region motif. Residues 581–585 (KMSKS) carry the 'KMSKS' region motif. Lysine 584 serves as a coordination point for ATP.

The protein belongs to the class-I aminoacyl-tRNA synthetase family.

It is found in the cytoplasm. It carries out the reaction tRNA(Leu) + L-leucine + ATP = L-leucyl-tRNA(Leu) + AMP + diphosphate. The polypeptide is Leucine--tRNA ligase (Desulforudis audaxviator (strain MP104C)).